A 376-amino-acid polypeptide reads, in one-letter code: Endo-1,4-beta-xylanase A (376 aa).

An N-terminal signal peptide occupies residues 1–18 (MHLASSLFLLATLPFGFA). Positions 55 to 355 (QRERAGLEDK…HPAYYGVVEA (301 aa)) constitute a GH10 domain. N-linked (GlcNAc...) asparagine glycosylation occurs at Asn-100. Glu-170 acts as the Proton donor in catalysis. The Nucleophile role is filled by Glu-277. A glycan (N-linked (GlcNAc...) asparagine) is linked at Asn-358.

This sequence belongs to the glycosyl hydrolase 10 (cellulase F) family.

It is found in the secreted. It catalyses the reaction Endohydrolysis of (1-&gt;4)-beta-D-xylosidic linkages in xylans.. The protein operates within glycan degradation; xylan degradation. With respect to regulation, partial inhibition of activity is detected in the presence of Ag(+), Cu2(+) and SDS. Like most fungal xylanases, activity is completely inhibited by Hg(2+) since Hg(2+) could interact with tryptophan residues and oxidize the indole ring. Beta-mercaptoethanol enhances the enzymatic activity by counteracting the oxidation effects of the S-S linkage between cysteine residues. Its function is as follows. Endo-1,4-beta-xylanase involved in the hydrolysis of xylan, a major structural heterogeneous polysaccharide found in plant biomass representing the second most abundant polysaccharide in the biosphere, after cellulose. Is most active on birchwood xylan (defined as 100%), moderate on beechwood xylan (96.8%) and soluble wheat arabinoxylan (84.5%), and weak on insoluble wheat arabinoxylan (19.7%). Hydrolyzes substrates into a mixture of xylobiose and xylotriose, but no xylose. No activity was detected in the presence of barley beta-glucan, carboxymethyl cellulose-sodium (CMC-Na), and Avicel. Acts as an alkali-tolerant xylanase, exhibiting 68.8% of the activity at pH 9.0, and even 31.8% at pH 10.0. The protein is Endo-1,4-beta-xylanase A of Humicola insolens (Soft-rot fungus).